Consider the following 282-residue polypeptide: 4-hydroxy-3-methylbut-2-enyl diphosphate reductase (282 aa).

Cys12 contacts [4Fe-4S] cluster. Residues His40 and His72 each contribute to the (2E)-4-hydroxy-3-methylbut-2-enyl diphosphate site. The dimethylallyl diphosphate site is built by His40 and His72. His40 and His72 together coordinate isopentenyl diphosphate. A [4Fe-4S] cluster-binding site is contributed by Cys94. His122 is a binding site for (2E)-4-hydroxy-3-methylbut-2-enyl diphosphate. His122 contacts dimethylallyl diphosphate. His122 is a binding site for isopentenyl diphosphate. Residue Glu124 is the Proton donor of the active site. A (2E)-4-hydroxy-3-methylbut-2-enyl diphosphate-binding site is contributed by Thr160. Residue Cys188 coordinates [4Fe-4S] cluster. (2E)-4-hydroxy-3-methylbut-2-enyl diphosphate-binding residues include Ser216, Asn218, and Ser260. Dimethylallyl diphosphate is bound by residues Ser216, Asn218, and Ser260. Residues Ser216, Asn218, and Ser260 each contribute to the isopentenyl diphosphate site.

The protein belongs to the IspH family. It depends on [4Fe-4S] cluster as a cofactor.

The enzyme catalyses isopentenyl diphosphate + 2 oxidized [2Fe-2S]-[ferredoxin] + H2O = (2E)-4-hydroxy-3-methylbut-2-enyl diphosphate + 2 reduced [2Fe-2S]-[ferredoxin] + 2 H(+). It catalyses the reaction dimethylallyl diphosphate + 2 oxidized [2Fe-2S]-[ferredoxin] + H2O = (2E)-4-hydroxy-3-methylbut-2-enyl diphosphate + 2 reduced [2Fe-2S]-[ferredoxin] + 2 H(+). It functions in the pathway isoprenoid biosynthesis; dimethylallyl diphosphate biosynthesis; dimethylallyl diphosphate from (2E)-4-hydroxy-3-methylbutenyl diphosphate: step 1/1. The protein operates within isoprenoid biosynthesis; isopentenyl diphosphate biosynthesis via DXP pathway; isopentenyl diphosphate from 1-deoxy-D-xylulose 5-phosphate: step 6/6. Catalyzes the conversion of 1-hydroxy-2-methyl-2-(E)-butenyl 4-diphosphate (HMBPP) into a mixture of isopentenyl diphosphate (IPP) and dimethylallyl diphosphate (DMAPP). Acts in the terminal step of the DOXP/MEP pathway for isoprenoid precursor biosynthesis. This chain is 4-hydroxy-3-methylbut-2-enyl diphosphate reductase, found in Geotalea uraniireducens (strain Rf4) (Geobacter uraniireducens).